We begin with the raw amino-acid sequence, 203 residues long: ATP-dependent Clp protease proteolytic subunit (203 aa).

The active-site Nucleophile is Ser107. The active site involves His132.

The protein belongs to the peptidase S14 family. In terms of assembly, fourteen ClpP subunits assemble into 2 heptameric rings which stack back to back to give a disk-like structure with a central cavity, resembling the structure of eukaryotic proteasomes.

It localises to the cytoplasm. The catalysed reaction is Hydrolysis of proteins to small peptides in the presence of ATP and magnesium. alpha-casein is the usual test substrate. In the absence of ATP, only oligopeptides shorter than five residues are hydrolyzed (such as succinyl-Leu-Tyr-|-NHMec, and Leu-Tyr-Leu-|-Tyr-Trp, in which cleavage of the -Tyr-|-Leu- and -Tyr-|-Trp bonds also occurs).. Cleaves peptides in various proteins in a process that requires ATP hydrolysis. Has a chymotrypsin-like activity. Plays a major role in the degradation of misfolded proteins. In Shewanella frigidimarina (strain NCIMB 400), this protein is ATP-dependent Clp protease proteolytic subunit.